The primary structure comprises 142 residues: Large ribosomal subunit protein uL13 (142 aa).

Belongs to the universal ribosomal protein uL13 family. In terms of assembly, part of the 50S ribosomal subunit.

Its function is as follows. This protein is one of the early assembly proteins of the 50S ribosomal subunit, although it is not seen to bind rRNA by itself. It is important during the early stages of 50S assembly. This Hamiltonella defensa subsp. Acyrthosiphon pisum (strain 5AT) protein is Large ribosomal subunit protein uL13.